A 541-amino-acid chain; its full sequence is Transcription termination factor MTERF4, chloroplastic (541 aa).

A chloroplast-targeting transit peptide spans 1–45 (MKIRFCNGFTKPGFLLVHFEPPSFFAVRSRSLSDSTYGNLCNHKK). Disordered regions lie at residues 66–103 (SRSLDSPRRERSSRSSSSSGRDRDRDKDKGRDSKSLYS) and 503–541 (EVETDPSSFDMNTLMQPEREEESDSEYEEEEDDDDEEFA). Residues 85–99 (GRDRDRDKDKGRDSK) show a composition bias toward basic and acidic residues. Over residues 507–517 (DPSSFDMNTLM) the composition is skewed to polar residues. Residues 521–541 (REEESDSEYEEEEDDDDEEFA) are compositionally biased toward acidic residues.

It belongs to the mTERF family.

The protein localises to the plastid. It localises to the chloroplast. It is found in the mitochondrion. Its function is as follows. Transcription termination factor required for processing and steady-state levels of plastid transcripts. Required for splicing of the chloroplastic Clp protease (ClpP) group IIa intron. Required for maturation of 16S rRNA and 23S rRNA in the chloroplast. Essential for embryogenesis. Required for the maintenance of the correct levels of transcripts in the mitochondria and chloroplasts. This is Transcription termination factor MTERF4, chloroplastic from Arabidopsis thaliana (Mouse-ear cress).